Here is a 316-residue protein sequence, read N- to C-terminus: Pantothenate kinase (316 aa).

Residue 95–102 coordinates ATP; it reads GSVAVGKS.

It belongs to the prokaryotic pantothenate kinase family.

Its subcellular location is the cytoplasm. The catalysed reaction is (R)-pantothenate + ATP = (R)-4'-phosphopantothenate + ADP + H(+). It functions in the pathway cofactor biosynthesis; coenzyme A biosynthesis; CoA from (R)-pantothenate: step 1/5. This Shewanella sediminis (strain HAW-EB3) protein is Pantothenate kinase.